We begin with the raw amino-acid sequence, 363 residues long: MEAVDLLANVSVTGLLLFWGDCEFFVSEILYDENLSENAQETRKVLLNNFRVVHVRNPQEFPFPSDYKEEDGSDDNRSSSLGRSAQSDDASLASDNQDDGIPEYFGDIPPVAAQDIVNVLKQGYLEKKRKDHSFFGSEWQKRWCVLNNLVFYYFGSDKDKQQKGSFYISDYSVQLVTNLRKDSRKTSCFEFFAPGRRPFQFTAGSPQEAKEWVDQIKIVLRDLSSTVIPVDDEEEEEEEEETYDDIEGEGGPPLPQPLSGTWGRGGDTGAADEEDEDIYEVLPEESPDSADGSMERNNKPEYANYYQGLWDCSADEPDELPFQRGDLIYIISKEYNIYGWWVGELNGAVGIVPKDFLHPAYIL.

The interval 62 to 94 (PFPSDYKEEDGSDDNRSSSLGRSAQSDDASLAS) is disordered. A compositionally biased stretch (low complexity) spans 84-94 (SAQSDDASLAS). A PH domain is found at 118 to 221 (NVLKQGYLEK…WVDQIKIVLR (104 aa)). A disordered region spans residues 227–273 (VIPVDDEEEEEEEEETYDDIEGEGGPPLPQPLSGTWGRGGDTGAADE). Residues 230–248 (VDDEEEEEEEEETYDDIEG) show a composition bias toward acidic residues. In terms of domain architecture, SH3 spans 301–362 (EYANYYQGLW…PKDFLHPAYI (62 aa)).

Belongs to the SKAP family. In terms of assembly, homodimer. Phosphorylated on tyrosines.

It localises to the cytoplasm. The protein resides in the nucleus. Its subcellular location is the cell membrane. In terms of biological role, positively regulates T-cell receptor signaling. Required for optimal conjugation between T-cells and antigen-presenting cells. The polypeptide is Src kinase-associated phosphoprotein 1 (skap1) (Takifugu rubripes (Japanese pufferfish)).